A 353-amino-acid polypeptide reads, in one-letter code: 4-hydroxy-3-methylbut-2-en-1-yl diphosphate synthase (flavodoxin) (353 aa).

[4Fe-4S] cluster is bound by residues C263, C266, C298, and E305.

The protein belongs to the IspG family. The cofactor is [4Fe-4S] cluster.

The enzyme catalyses (2E)-4-hydroxy-3-methylbut-2-enyl diphosphate + oxidized [flavodoxin] + H2O + 2 H(+) = 2-C-methyl-D-erythritol 2,4-cyclic diphosphate + reduced [flavodoxin]. It participates in isoprenoid biosynthesis; isopentenyl diphosphate biosynthesis via DXP pathway; isopentenyl diphosphate from 1-deoxy-D-xylulose 5-phosphate: step 5/6. In terms of biological role, converts 2C-methyl-D-erythritol 2,4-cyclodiphosphate (ME-2,4cPP) into 1-hydroxy-2-methyl-2-(E)-butenyl 4-diphosphate. The sequence is that of 4-hydroxy-3-methylbut-2-en-1-yl diphosphate synthase (flavodoxin) from Geobacter sulfurreducens (strain ATCC 51573 / DSM 12127 / PCA).